Consider the following 184-residue polypeptide: MSRLAKKPIVLPQGVTVEIKDNVVKVKGPKGELSQEFLPYVKIEVEGNEVWVRPNENQIIRKSDWRKIKMFQGTYWSLIRNMVVGVTEGYKKELEIVGIGYRAQLQGNTVVMNLGYAHPVVYEIPSDVKIEVPAPNRIVVSGIDKQRVGQVAAEIRAFRPPNVYTGKGIRYVGEVVRQKEGKKA.

It belongs to the universal ribosomal protein uL6 family. As to quaternary structure, part of the 50S ribosomal subunit.

Functionally, this protein binds to the 23S rRNA, and is important in its secondary structure. It is located near the subunit interface in the base of the L7/L12 stalk, and near the tRNA binding site of the peptidyltransferase center. The polypeptide is Large ribosomal subunit protein uL6 (Thermotoga petrophila (strain ATCC BAA-488 / DSM 13995 / JCM 10881 / RKU-1)).